The sequence spans 118 residues: Large ribosomal subunit protein bL20 (118 aa).

This sequence belongs to the bacterial ribosomal protein bL20 family.

Binds directly to 23S ribosomal RNA and is necessary for the in vitro assembly process of the 50S ribosomal subunit. It is not involved in the protein synthesizing functions of that subunit. The sequence is that of Large ribosomal subunit protein bL20 from Francisella tularensis subsp. tularensis (strain FSC 198).